The sequence spans 419 residues: DNA ligase (419 aa).

An NTD region spans residues 1–120 (MLSQFPGQCS…ARQKRGAHTN (120 aa)). An AD domain region spans residues 121 to 317 (RGMIPPMLVK…NYHSPHLAKL (197 aa)). The ATP site is built by His149, Lys151, Glu203, and Phe232. Catalysis depends on Lys151, which acts as the N6-AMP-lysine intermediate. Glu203 serves as a coordination point for a divalent metal cation. Glu291 contacts a divalent metal cation. ATP-binding residues include Ile294 and Lys316. Positions 318 to 419 (KPLLDAEFIL…REPINVLEII (102 aa)) are OB domain.

This sequence belongs to the ATP-dependent DNA ligase family. Requires a divalent metal cation as cofactor.

It is found in the virion. The enzyme catalyses ATP + (deoxyribonucleotide)n-3'-hydroxyl + 5'-phospho-(deoxyribonucleotide)m = (deoxyribonucleotide)n+m + AMP + diphosphate.. Functionally, very low-fidelity DNA ligase that seals nicks in double-stranded DNA during DNA repair. Together with the viral repair DNA polymerase X, fills the single nucleotide gaps generated by the AP endonuclease. It is not essential for viral replication and recombination. Displays a very low adenylation activity towards DNA with 3'-dideoxy- or 3'-amino-terminated nicks compared to regular nick DNA. The polypeptide is DNA ligase (LIG) (Ornithodoros (relapsing fever ticks)).